We begin with the raw amino-acid sequence, 257 residues long: Transcription factor MYB4 (257 aa).

HTH myb-type domains are found at residues 9–61 (KMGL…INYL) and 62–116 (RPDI…KKRL). 2 DNA-binding regions (H-T-H motif) span residues 37–61 (WRALPKQAGLLRCGKSCRLRWINYL) and 89–112 (WSAIAARLPGRTDNEIKNVWHTHL). The interval 115–179 (RLDAPAQGGH…VAEEHGNAGI (65 aa)) is disordered. Positions 130–140 (GKKHKKPKSAK) are enriched in basic residues. A compositionally biased stretch (low complexity) spans 141–170 (KPAAAAAAPPASPERSASSSVTESSMASSV).

The protein resides in the nucleus. Its function is as follows. Transcriptional activator involved in cold stress response. Regulates positively the expression of genes involved in reactive oxygen species (ROS) scavenging such as peroxidase and superoxide dismutase during cold stress. Transactivates a complex gene network that have major effects on stress tolerance and panicle development. The protein is Transcription factor MYB4 of Oryza sativa subsp. japonica (Rice).